Consider the following 174-residue polypeptide: Nucleoside-triphosphatase THEP1 (174 aa).

Residues 7–14 (GRPGSGKS) and 98–105 (CIIIDEIG) each bind ATP.

This sequence belongs to the THEP1 NTPase family.

The catalysed reaction is a ribonucleoside 5'-triphosphate + H2O = a ribonucleoside 5'-diphosphate + phosphate + H(+). In terms of biological role, has nucleotide phosphatase activity towards ATP, GTP, CTP, TTP and UTP. May hydrolyze nucleoside diphosphates with lower efficiency. The sequence is that of Nucleoside-triphosphatase THEP1 from Methanothermobacter thermautotrophicus (strain ATCC 29096 / DSM 1053 / JCM 10044 / NBRC 100330 / Delta H) (Methanobacterium thermoautotrophicum).